A 160-amino-acid chain; its full sequence is Putative 4-hydroxy-4-methyl-2-oxoglutarate aldolase (160 aa).

Residues 76 to 79 (GGNL) and Arg-98 contribute to the substrate site. Asp-99 provides a ligand contact to a divalent metal cation.

This sequence belongs to the class II aldolase/RraA-like family. Homotrimer. A divalent metal cation serves as cofactor.

It catalyses the reaction 4-hydroxy-4-methyl-2-oxoglutarate = 2 pyruvate. The enzyme catalyses oxaloacetate + H(+) = pyruvate + CO2. Catalyzes the aldol cleavage of 4-hydroxy-4-methyl-2-oxoglutarate (HMG) into 2 molecules of pyruvate. Also contains a secondary oxaloacetate (OAA) decarboxylase activity due to the common pyruvate enolate transition state formed following C-C bond cleavage in the retro-aldol and decarboxylation reactions. The sequence is that of Putative 4-hydroxy-4-methyl-2-oxoglutarate aldolase from Deinococcus radiodurans (strain ATCC 13939 / DSM 20539 / JCM 16871 / CCUG 27074 / LMG 4051 / NBRC 15346 / NCIMB 9279 / VKM B-1422 / R1).